Here is a 253-residue protein sequence, read N- to C-terminus: 3-deoxy-manno-octulosonate cytidylyltransferase (253 aa).

This sequence belongs to the KdsB family.

The protein localises to the cytoplasm. It carries out the reaction 3-deoxy-alpha-D-manno-oct-2-ulosonate + CTP = CMP-3-deoxy-beta-D-manno-octulosonate + diphosphate. It participates in nucleotide-sugar biosynthesis; CMP-3-deoxy-D-manno-octulosonate biosynthesis; CMP-3-deoxy-D-manno-octulosonate from 3-deoxy-D-manno-octulosonate and CTP: step 1/1. Its pathway is bacterial outer membrane biogenesis; lipopolysaccharide biosynthesis. Activates KDO (a required 8-carbon sugar) for incorporation into bacterial lipopolysaccharide in Gram-negative bacteria. The protein is 3-deoxy-manno-octulosonate cytidylyltransferase of Acinetobacter baumannii (strain ATCC 17978 / DSM 105126 / CIP 53.77 / LMG 1025 / NCDC KC755 / 5377).